The chain runs to 214 residues: Protein DEHYDRATION-INDUCED 19 homolog 5 (214 aa).

The residue at position 110 (Ser-110) is a Phosphoserine. Positions 148-185 (PKKSKLVQPDSSSEASMEDNSLIRDSTEKDWESPSPLS) are disordered. Positions 156-166 (PDSSSEASMED) are enriched in polar residues. Basic and acidic residues predominate over residues 168 to 179 (SLIRDSTEKDWE).

It belongs to the Di19 family. In terms of processing, phosphorylated in vitro by CPK3 or CPK11. Expressed in seedlings, roots, leaves, stems, flowers and siliques.

The protein localises to the nucleus. This is Protein DEHYDRATION-INDUCED 19 homolog 5 (DI19-5) from Arabidopsis thaliana (Mouse-ear cress).